Here is a 341-residue protein sequence, read N- to C-terminus: tRNA N6-adenosine threonylcarbamoyltransferase (341 aa).

Fe cation is bound by residues His-111 and His-115. Substrate contacts are provided by residues 134–138 (LVSGG), Asp-167, Gly-180, and Asn-276. Fe cation is bound at residue Asp-304.

Belongs to the KAE1 / TsaD family. The cofactor is Fe(2+).

It localises to the cytoplasm. It catalyses the reaction L-threonylcarbamoyladenylate + adenosine(37) in tRNA = N(6)-L-threonylcarbamoyladenosine(37) in tRNA + AMP + H(+). In terms of biological role, required for the formation of a threonylcarbamoyl group on adenosine at position 37 (t(6)A37) in tRNAs that read codons beginning with adenine. Is involved in the transfer of the threonylcarbamoyl moiety of threonylcarbamoyl-AMP (TC-AMP) to the N6 group of A37, together with TsaE and TsaB. TsaD likely plays a direct catalytic role in this reaction. The sequence is that of tRNA N6-adenosine threonylcarbamoyltransferase from Pseudomonas putida (strain W619).